A 473-amino-acid polypeptide reads, in one-letter code: Adenosylhomocysteinase (473 aa).

Substrate is bound by residues T60, D135, and E197. 198 to 200 (TTT) lines the NAD(+) pocket. The substrate site is built by K227 and D231. NAD(+) is bound by residues N232, 261–266 (GFGDVG), E284, N319, 340–342 (IGH), and N385.

This sequence belongs to the adenosylhomocysteinase family. Requires NAD(+) as cofactor.

It is found in the cytoplasm. It carries out the reaction S-adenosyl-L-homocysteine + H2O = L-homocysteine + adenosine. Its pathway is amino-acid biosynthesis; L-homocysteine biosynthesis; L-homocysteine from S-adenosyl-L-homocysteine: step 1/1. In terms of biological role, may play a key role in the regulation of the intracellular concentration of adenosylhomocysteine. The sequence is that of Adenosylhomocysteinase from Bradyrhizobium sp. (strain BTAi1 / ATCC BAA-1182).